The primary structure comprises 196 residues: GTP cyclohydrolase 1 (196 aa).

3 residues coordinate Zn(2+): Cys85, His88, and Cys156.

It belongs to the GTP cyclohydrolase I family. As to quaternary structure, toroid-shaped homodecamer, composed of two pentamers of five dimers.

It catalyses the reaction GTP + H2O = 7,8-dihydroneopterin 3'-triphosphate + formate + H(+). The protein operates within cofactor biosynthesis; 7,8-dihydroneopterin triphosphate biosynthesis; 7,8-dihydroneopterin triphosphate from GTP: step 1/1. In Bacteroides thetaiotaomicron (strain ATCC 29148 / DSM 2079 / JCM 5827 / CCUG 10774 / NCTC 10582 / VPI-5482 / E50), this protein is GTP cyclohydrolase 1.